A 209-amino-acid chain; its full sequence is Thiamine-phosphate synthase (209 aa).

Residues 38–42 (QLREK) and Asn70 each bind 4-amino-2-methyl-5-(diphosphooxymethyl)pyrimidine. Mg(2+) is bound by residues Asp71 and Asp90. Ser109 is a binding site for 4-amino-2-methyl-5-(diphosphooxymethyl)pyrimidine. 2-[(2R,5Z)-2-carboxy-4-methylthiazol-5(2H)-ylidene]ethyl phosphate is bound at residue 135–137 (TPT). Lys138 provides a ligand contact to 4-amino-2-methyl-5-(diphosphooxymethyl)pyrimidine. 2-[(2R,5Z)-2-carboxy-4-methylthiazol-5(2H)-ylidene]ethyl phosphate is bound by residues Gly166 and 186 to 187 (IS).

Belongs to the thiamine-phosphate synthase family. Mg(2+) serves as cofactor.

The enzyme catalyses 2-[(2R,5Z)-2-carboxy-4-methylthiazol-5(2H)-ylidene]ethyl phosphate + 4-amino-2-methyl-5-(diphosphooxymethyl)pyrimidine + 2 H(+) = thiamine phosphate + CO2 + diphosphate. It catalyses the reaction 2-(2-carboxy-4-methylthiazol-5-yl)ethyl phosphate + 4-amino-2-methyl-5-(diphosphooxymethyl)pyrimidine + 2 H(+) = thiamine phosphate + CO2 + diphosphate. The catalysed reaction is 4-methyl-5-(2-phosphooxyethyl)-thiazole + 4-amino-2-methyl-5-(diphosphooxymethyl)pyrimidine + H(+) = thiamine phosphate + diphosphate. The protein operates within cofactor biosynthesis; thiamine diphosphate biosynthesis; thiamine phosphate from 4-amino-2-methyl-5-diphosphomethylpyrimidine and 4-methyl-5-(2-phosphoethyl)-thiazole: step 1/1. Condenses 4-methyl-5-(beta-hydroxyethyl)thiazole monophosphate (THZ-P) and 2-methyl-4-amino-5-hydroxymethyl pyrimidine pyrophosphate (HMP-PP) to form thiamine monophosphate (TMP). The protein is Thiamine-phosphate synthase of Syntrophomonas wolfei subsp. wolfei (strain DSM 2245B / Goettingen).